Here is a 402-residue protein sequence, read N- to C-terminus: Flavohemoprotein (402 aa).

The Globin domain occupies 1 to 136 (MLSEKTIEIV…IADAFISIEA (136 aa)). Histidine 85 is a binding site for heme b. Residues tyrosine 95 and glutamate 135 each act as charge relay system in the active site. Residues 147 to 402 (GGWKDFRNFV…EFFGPAASLQ (256 aa)) form a reductase region. One can recognise an FAD-binding FR-type domain in the interval 150–260 (KDFRNFVVVK…SAPAGDFVLN (111 aa)). Residues tyrosine 188 and 204–207 (RQYS) each bind FAD. Residue 273-278 (GVGITP) participates in NADP(+) binding. FAD is bound at residue 394-397 (FFGP).

This sequence belongs to the globin family. Two-domain flavohemoproteins subfamily. The protein in the C-terminal section; belongs to the flavoprotein pyridine nucleotide cytochrome reductase family. It depends on heme b as a cofactor. The cofactor is FAD.

It catalyses the reaction 2 nitric oxide + NADPH + 2 O2 = 2 nitrate + NADP(+) + H(+). The enzyme catalyses 2 nitric oxide + NADH + 2 O2 = 2 nitrate + NAD(+) + H(+). Is involved in NO detoxification in an aerobic process, termed nitric oxide dioxygenase (NOD) reaction that utilizes O(2) and NAD(P)H to convert NO to nitrate, which protects the bacterium from various noxious nitrogen compounds. Therefore, plays a central role in the inducible response to nitrosative stress. This Bacillus cereus (strain ATCC 10987 / NRS 248) protein is Flavohemoprotein.